Here is a 220-residue protein sequence, read N- to C-terminus: Putative O-methyltransferase Mmcs_3995 (220 aa).

Residues Val-47, Glu-69, Gly-71–Thr-72, Ser-77, Asp-95, and Val-96 contribute to the S-adenosyl-L-methionine site. Position 143 (Asp-143) interacts with substrate. Residue Asp-145 participates in S-adenosyl-L-methionine binding.

Belongs to the class I-like SAM-binding methyltransferase superfamily. Cation-dependent O-methyltransferase family.

This is Putative O-methyltransferase Mmcs_3995 from Mycobacterium sp. (strain MCS).